Here is a 723-residue protein sequence, read N- to C-terminus: MGAKTPWIQLQKLLNWWVRDQDWNQHVDQLHMLQQKSIWESPLLRAAKENDMCTLKKLQHDQNCDFRQRGALGETALHVAALYDNLDAAIMLMEAAPYLVTESTLCEPFVGQTALHIAVMNQNVNLVRALLARGASASARATGSAFHRSSHNLIYYGEHPLSFAACVGSEEIVRLLIEHGADIRAQDSLGNTVLHILVLQPNKTFACQMYNLLLSYDGGDHLKSLELVPNNQGLTPFKLAGVEGNTVMFQHLMQKRKRIQWSFGPLTSSLYDLTEIDSWGEELSFLELVVSSKKKEARQILEQTPVKELVSLKWKKYGQPYFCLLGALYIFYMVCFTTCCVYRPLKFRDANRTHVRDNTIMEQKSLQEAYVTYQDKIRLVGELVTVIGAVIILLLEIPDIFRVGASRYFGQTVLGGPFHVIIITYASLVLLTMAMRLTNVNGEVVPMSMALVLGWCSVMYFARGFQMLGPFTIMIQKMIFGDLLRFCWLMAMVILGFASAFYIIFQTEDPDNLGEFSDYPTAMFSTFELFLTIIDGPANYRVDLPFMYSVTYATFAIIATLLMLNLFIAMMGDTHWRVAQERDELWRAQVVATTVMLERKMPRFLWPRSGICGCEYGLGDRWFLRVEHHQEQNPYRVLRYVEAFKSSDKEEVQEQLSEKQPSGTETGTLARGSVVLQTPPLSRTTSLSSNSHRGWEILRRNTLGHLNLGLDPGEGDGEEIYQF.

At 1-320 the chain is on the cytoplasmic side; that stretch reads MGAKTPWIQL…SLKWKKYGQP (320 aa). ANK repeat units follow at residues 38-68, 72-101, 110-139, 156-185, 189-222, and 232-261; these read IWES…DFRQ, LGET…YLVT, VGQT…SASA, YGEH…DIRA, LGNT…GDHL, and QGLT…RIQW. The chain crosses the membrane as a helical span at residues 321-341; the sequence is YFCLLGALYIFYMVCFTTCCV. Residues 342–378 lie on the Extracellular side of the membrane; the sequence is YRPLKFRDANRTHVRDNTIMEQKSLQEAYVTYQDKIR. Residues 379–401 traverse the membrane as a helical segment; the sequence is LVGELVTVIGAVIILLLEIPDIF. The Extracellular segment spans residues 402–412; sequence RVGASRYFGQT. Residues 413-435 traverse the membrane as a helical segment; that stretch reads VLGGPFHVIIITYASLVLLTMAM. The Cytoplasmic segment spans residues 436 to 441; it reads RLTNVN. Residues 442 to 462 form a helical membrane-spanning segment; it reads GEVVPMSMALVLGWCSVMYFA. Over 463–485 the chain is Extracellular; it reads RGFQMLGPFTIMIQKMIFGDLLR. A helical membrane pass occupies residues 486–506; that stretch reads FCWLMAMVILGFASAFYIIFQ. Residues 517–537 constitute an intramembrane region (pore-forming); it reads SDYPTAMFSTFELFLTIIDGP. Aspartate 535 provides a ligand contact to Ca(2+). A helical transmembrane segment spans residues 550–570; the sequence is VTYATFAIIATLLMLNLFIAM. Over 571 to 723 the chain is Cytoplasmic; sequence MGDTHWRVAQ…EGDGEEIYQF (153 aa). Residues 591–595 form an interaction with S100A10 region; sequence VATTV. Positions 643 to 646 are involved in Ca(2+)-dependent inactivation; that stretch reads AFKS. Positions 651–673 are disordered; sequence EVQEQLSEKQPSGTETGTLARGS. Over residues 654–667 the composition is skewed to polar residues; it reads EQLSEKQPSGTETG. Threonine 678 bears the Phosphothreonine mark. The residue at position 682 (serine 682) is a Phosphoserine. The interval 693–723 is involved in Ca(2+)-dependent inactivation; it reads RGWEILRRNTLGHLNLGLDPGEGDGEEIYQF.

It belongs to the transient receptor (TC 1.A.4) family. TrpV subfamily. TRPV5 sub-subfamily. In terms of assembly, homotetramer and probably heterotetramer with TRPV6. Interacts with TRPV6. Interacts with S100A10 and probably with the ANAX2-S100A10 heterotetramer. The interaction with S100A10 is required for the trafficking to the plasma membrane. Interacts with calmodulin. Interacts with BSPRY, which results in its inactivation. Glycosylated. In terms of tissue distribution, detected in kidney cortex (at protein level).

Its subcellular location is the apical cell membrane. The enzyme catalyses Ca(2+)(in) = Ca(2+)(out). With respect to regulation, activated by WNK3. Its function is as follows. Constitutively active calcium selective cation channel thought to be involved in Ca(2+) reabsorption in kidney and intestine. Required for normal Ca(2+) reabsorption in the kidney distal convoluted tubules. The channel is activated by low internal calcium level and the current exhibits an inward rectification. A Ca(2+)-dependent feedback regulation includes fast channel inactivation and slow current decay. Heteromeric assembly with TRPV6 seems to modify channel properties. TRPV5-TRPV6 heteromultimeric concatemers exhibit voltage-dependent gating. In Mus musculus (Mouse), this protein is Transient receptor potential cation channel subfamily V member 5 (Trpv5).